A 681-amino-acid polypeptide reads, in one-letter code: Amine oxidase [copper-containing] alpha 3, peroxisomal (681 aa).

Residue 323–334 (YLDCGDFGCGQC) participates in substrate binding. The Proton acceptor role is filled by D325. A disulfide bond links C344 and C370. 410–415 (VGNYDY) contacts substrate. Y413 (schiff-base intermediate with substrate; via topaquinone) is an active-site residue. Y413 bears the 2',4',5'-topaquinone mark. Cu cation-binding residues include H470 and H472. Residues D481, D621, and I622 each coordinate Mn(2+). H632 contributes to the Cu cation binding site.

This sequence belongs to the copper/topaquinone oxidase family. Topaquinone (TPQ) is generated by copper-dependent autoxidation of a specific tyrosyl residue. Mostly expressed in stems, and, at lower levels, in flowers and leaves. Mainly detectable in stipules, hypocotyls and roots.

It is found in the peroxisome. It carries out the reaction a primary methyl amine + O2 + H2O = an aldehyde + H2O2 + NH4(+). It functions in the pathway amine and polyamine degradation; putrescine degradation. Its function is as follows. Copper amine oxidase that can use putrescine and spermidine as substrates. Involved in putrescine catabolism in peroxisomes. In Arabidopsis thaliana (Mouse-ear cress), this protein is Amine oxidase [copper-containing] alpha 3, peroxisomal.